Consider the following 339-residue polypeptide: Protein FAM50A (339 aa).

Residues 1-31 (MAQYKGAASEAGRAMHLMKKREKQREQMEQM) form a disordered region. Alanine 2 carries the N-acetylalanine modification. Lysine 100 is covalently cross-linked (Glycyl lysine isopeptide (Lys-Gly) (interchain with G-Cter in SUMO2)). The disordered stretch occupies residues 150–177 (TTKKKKLGKNPDVDTSFLPDRDREEEEN). The Nuclear localization signal motif lies at 152 to 155 (KKKK). Over residues 168 to 177 (PDRDREEEEN) the composition is skewed to basic and acidic residues.

This sequence belongs to the FAM50 family. As to quaternary structure, interacts with EFTUD2, a component of the spliceosome U5 complex. Interacts with DDX41, a component of the spliceosome C complex. As to expression, widely expressed in embryonic and adult tissues.

The protein localises to the nucleus. In terms of biological role, probably involved in the regulation of pre-mRNA splicing. The protein is Protein FAM50A (Fam50a) of Mus musculus (Mouse).